A 429-amino-acid chain; its full sequence is ATP-dependent Clp protease ATP-binding subunit ClpX (429 aa).

The 54-residue stretch at 1 to 54 (MARSKSQKIEGCSFCGRTRAEAEGKIISAKSVAICFECSKICHNLFKEESDKPA) folds into the ClpX-type ZB domain. Residues cysteine 12, cysteine 15, cysteine 35, and cysteine 38 each coordinate Zn(2+). 119–126 (PTGSGKTL) is a binding site for ATP.

Belongs to the ClpX chaperone family. In terms of assembly, component of the ClpX-ClpP complex. Forms a hexameric ring that, in the presence of ATP, binds to fourteen ClpP subunits assembled into a disk-like structure with a central cavity, resembling the structure of eukaryotic proteasomes.

Functionally, ATP-dependent specificity component of the Clp protease. It directs the protease to specific substrates. Can perform chaperone functions in the absence of ClpP. The sequence is that of ATP-dependent Clp protease ATP-binding subunit ClpX from Borrelia duttonii (strain Ly).